Here is a 662-residue protein sequence, read N- to C-terminus: PAN2-PAN3 deadenylation complex subunit PAN3 (662 aa).

2 disordered regions span residues 1–29 and 53–133; these read MASA…NAKD and DPHK…DTVT. A C3H1-type zinc finger spans residues 26–55; it reads NAKDTLCRNITIYGRCRYEDKGCAFNHDPH. Positions 75–102 are enriched in low complexity; sequence SFTPSLLSSNGSSPTSTPATTKKMTTIS. Residues 115 to 133 show a composition bias toward polar residues; the sequence is SVVSRSNASTPGLRQDTVT. The tract at residues 263–525 is pseudokinase domain; sequence QTLPNTQLPA…NIDVFITGIS (263 aa). ATP is bound by residues arginine 315, 364–371, and 425–426; these read DYHPLSKT and SK. Positions 526 to 564 form a coiled coil; sequence SQLMSTFDSALHLDDQLTSDLSRELENGRLVRLMAKLNF. The interval 565 to 662 is knob domain; sequence VNERPEYEHD…ALMKPARRMH (98 aa).

The protein belongs to the protein kinase superfamily. PAN3 family. In terms of assembly, homodimer. Forms a heterotrimer with a catalytic subunit pan2 to form the poly(A)-nuclease (PAN) deadenylation complex. Interacts (via PAM-2 motif) with poly(A)-binding protein pab1 (via PABC domain), conferring substrate specificity of the enzyme complex.

It localises to the cytoplasm. Regulatory subunit of the poly(A)-nuclease (PAN) deadenylation complex, one of two cytoplasmic mRNA deadenylases involved in mRNA turnover. PAN specifically shortens poly(A) tails of RNA and the activity is stimulated by poly(A)-binding protein pab1. PAN deadenylation is followed by rapid degradation of the shortened mRNA tails by the CCR4-NOT complex. Deadenylated mRNAs are then degraded by two alternative mechanisms, namely exosome-mediated 3'-5' exonucleolytic degradation, or deadenylation-dependent mRNA decaping and subsequent 5'-3' exonucleolytic degradation by xrn1. May also be involved in post-transcriptional maturation of mRNA poly(A) tails. pan3 acts as a positive regulator for PAN activity, recruiting the catalytic subunit pan2 to mRNA via its interaction with RNA and with pab1. In Aspergillus fumigatus (strain ATCC MYA-4609 / CBS 101355 / FGSC A1100 / Af293) (Neosartorya fumigata), this protein is PAN2-PAN3 deadenylation complex subunit PAN3.